The sequence spans 635 residues: Chaperone protein DnaK (635 aa).

A Phosphothreonine; by autocatalysis modification is found at Thr200. The tract at residues 595 to 635 (KAQPLTEKVQAKSSAENTSKEKSKADDDVVDADFEEVKDDK) is disordered. Over residues 612 to 621 (TSKEKSKADD) the composition is skewed to basic and acidic residues. Acidic residues predominate over residues 622–635 (DVVDADFEEVKDDK).

It belongs to the heat shock protein 70 family.

Acts as a chaperone. This Ruthia magnifica subsp. Calyptogena magnifica protein is Chaperone protein DnaK.